The primary structure comprises 887 residues: MERSLELLLLLIRTLAIIHISQAQSQQGFISLDCGLPANEPSPYTEPRTGLQFSSDAAFIQSGKIGRIQANLEADFLKPSTTMRYFPDGKRNCYNLNVEKGRNHLIRARFVYGNYDGRDTGPKFDLYLGPNPWATIDLAKQVNGTRPEIMHIPTSNKLQVCLVKTGETTPLISVLEVRPMGSGTYLTKSGSLKLYYREYFSKSDSSLRYPDDIYDRQWTSFFDTEWTQINTTSDVGNSNDYKPPKVALTTAAIPTNASAPLTNEWSSVNPDEQYYVYAHFSEIQELQANETREFNMLLNGKLFFGPVVPPKLAISTILSVSPNTCEGGECNLQLIRTNRSTLPPLLNAYEVYKVIQFPQLETNETDVSAVKNIQATYELSRINWQSDPCVPQQFMWDGLNCSITDITTPPRITTLNLSSSGLTGTITAAIQNLTTLEKLDLSNNNLTGEVPEFLSNMKSLLVINLSGNDLNGTIPQSLQRKGLELLYQGNPRLISPGSTETKSGKSFPVTIVASVGSAAILIVVLVLVLFLRKKKPSAVEVVLPRPSRPTMNVPYANSPEPSIEMKKRKFTYSEVTKMTNNFGRVVGEGGFGVVCHGTVNGSEQVAVKLLSQSSTQGYKEFKAEVDLLLRVHHTNLVSLVGYCDEGDHLALIYEFVPNGDLRQHLSGKGGKPIVNWGTRLRIAAEAALGLEYLHIGCTPPMVHRDVKTTNILLDEHYKAKLADFGLSRSFPVGGESHVSTVIAGTPGYLDPEYYHTSRLSEKSDVYSFGIVLLEMITNQAVIDRNRRKSHITQWVGSELNGGDIAKIMDLKLNGDYDSRSAWRALELAMSCADPTSARRPTMSHVVIELKECLVSENSRRNMSRGMDTLSSPEVSMIFDAEMIPRAR.

Residues 1-23 (MERSLELLLLLIRTLAIIHISQA) form the signal peptide. Residues 25–510 (SQQGFISLDC…TKSGKSFPVT (486 aa)) lie on the Extracellular side of the membrane. N-linked (GlcNAc...) asparagine glycosylation is found at Asn143, Asn230, Asn256, Asn289, Asn338, Asn363, Asn400, Asn416, Asn432, Asn445, Asn464, and Asn471. 3 LRR repeats span residues 411–434 (RITTLNLSSSGLTGTITAAIQNLT), 435–457 (TLEKLDLSNNNLTGEVPEFLSNM), and 459–481 (SLLVINLSGNDLNGTIPQSLQRK). Residues 511–531 (IVASVGSAAILIVVLVLVLFL) traverse the membrane as a helical segment. At 532–887 (RKKKPSAVEV…FDAEMIPRAR (356 aa)) the chain is on the cytoplasmic side. The residue at position 571 (Thr571) is a Phosphothreonine. The Protein kinase domain occupies 580–853 (NNFGRVVGEG…HVVIELKECL (274 aa)). ATP is bound by residues 586–594 (VGEGGFGVV) and Lys608. Tyr653 is modified (phosphotyrosine). Catalysis depends on Asp705, which acts as the Proton acceptor. The residue at position 739 (Ser739) is a Phosphoserine. Residues Thr740 and Thr745 each carry the phosphothreonine modification. Tyr753 is modified (phosphotyrosine).

The protein belongs to the protein kinase superfamily. Ser/Thr protein kinase family.

It localises to the membrane. It catalyses the reaction L-seryl-[protein] + ATP = O-phospho-L-seryl-[protein] + ADP + H(+). It carries out the reaction L-threonyl-[protein] + ATP = O-phospho-L-threonyl-[protein] + ADP + H(+). This Arabidopsis thaliana (Mouse-ear cress) protein is Probable LRR receptor-like serine/threonine-protein kinase At5g59680.